A 510-amino-acid chain; its full sequence is Ribonuclease Y (510 aa).

A helical membrane pass occupies residues 1–21 (MLIYILSGLGVLVGALLGYVV). Residues 200–260 (TVSTIMLPND…LRREIAKRTI (61 aa)) form the KH domain. Residues 326–419 (VLNHSIEVAL…VAAADALSAA (94 aa)) form the HD domain.

It belongs to the RNase Y family.

It is found in the cell membrane. Functionally, endoribonuclease that initiates mRNA decay. This Thermosipho melanesiensis (strain DSM 12029 / CIP 104789 / BI429) protein is Ribonuclease Y.